Here is a 184-residue protein sequence, read N- to C-terminus: ATP synthase subunit b, chloroplastic (184 aa).

The helical transmembrane segment at 27–49 (LATNPINLSIVIGVLIFFGKGVL) threads the bilayer.

This sequence belongs to the ATPase B chain family. In terms of assembly, F-type ATPases have 2 components, F(1) - the catalytic core - and F(0) - the membrane proton channel. F(1) has five subunits: alpha(3), beta(3), gamma(1), delta(1), epsilon(1). F(0) has four main subunits: a(1), b(1), b'(1) and c(10-14). The alpha and beta chains form an alternating ring which encloses part of the gamma chain. F(1) is attached to F(0) by a central stalk formed by the gamma and epsilon chains, while a peripheral stalk is formed by the delta, b and b' chains.

The protein localises to the plastid. Its subcellular location is the chloroplast thylakoid membrane. F(1)F(0) ATP synthase produces ATP from ADP in the presence of a proton or sodium gradient. F-type ATPases consist of two structural domains, F(1) containing the extramembraneous catalytic core and F(0) containing the membrane proton channel, linked together by a central stalk and a peripheral stalk. During catalysis, ATP synthesis in the catalytic domain of F(1) is coupled via a rotary mechanism of the central stalk subunits to proton translocation. Functionally, component of the F(0) channel, it forms part of the peripheral stalk, linking F(1) to F(0). This is ATP synthase subunit b, chloroplastic from Lotus japonicus (Lotus corniculatus var. japonicus).